A 228-amino-acid chain; its full sequence is Small ribosomal subunit protein uS3 (228 aa).

Residues 39-107 (VRAYLQDKLK…PVHINIEEIR (69 aa)) enclose the KH type-2 domain.

This sequence belongs to the universal ribosomal protein uS3 family. As to quaternary structure, part of the 30S ribosomal subunit. Forms a tight complex with proteins S10 and S14.

In terms of biological role, binds the lower part of the 30S subunit head. Binds mRNA in the 70S ribosome, positioning it for translation. The sequence is that of Small ribosomal subunit protein uS3 from Ectopseudomonas mendocina (strain ymp) (Pseudomonas mendocina).